We begin with the raw amino-acid sequence, 259 residues long: 5'-nucleotidase SurE (259 aa).

Residues D8, D9, S39, and N96 each contribute to the a divalent metal cation site.

Belongs to the SurE nucleotidase family. A divalent metal cation serves as cofactor.

Its subcellular location is the cytoplasm. The enzyme catalyses a ribonucleoside 5'-phosphate + H2O = a ribonucleoside + phosphate. Functionally, nucleotidase that shows phosphatase activity on nucleoside 5'-monophosphates. The chain is 5'-nucleotidase SurE from Pelotomaculum thermopropionicum (strain DSM 13744 / JCM 10971 / SI).